The chain runs to 794 residues: Phosphoenolpyruvate synthase (794 aa).

The active-site Tele-phosphohistidine intermediate is His422. Positions 512, 579, 681, 702, 703, 704, and 705 each coordinate substrate. Glu681 contributes to the Mg(2+) binding site. Mg(2+) is bound at residue Asp705. The Proton donor role is filled by Cys752.

It belongs to the PEP-utilizing enzyme family. The cofactor is Mg(2+).

It catalyses the reaction pyruvate + ATP + H2O = phosphoenolpyruvate + AMP + phosphate + 2 H(+). The protein operates within carbohydrate biosynthesis; gluconeogenesis. Its function is as follows. Catalyzes the phosphorylation of pyruvate to phosphoenolpyruvate. The polypeptide is Phosphoenolpyruvate synthase (ppsA) (Neisseria meningitidis serogroup B (strain ATCC BAA-335 / MC58)).